The chain runs to 220 residues: FMN-dependent NADH:quinone oxidoreductase (220 aa).

FMN contacts are provided by residues S10, S17–S19, and S136–G139. Residues H200–R220 are disordered.

The protein belongs to the azoreductase type 1 family. In terms of assembly, homodimer. Requires FMN as cofactor.

It catalyses the reaction 2 a quinone + NADH + H(+) = 2 a 1,4-benzosemiquinone + NAD(+). It carries out the reaction N,N-dimethyl-1,4-phenylenediamine + anthranilate + 2 NAD(+) = 2-(4-dimethylaminophenyl)diazenylbenzoate + 2 NADH + 2 H(+). Its function is as follows. Quinone reductase that provides resistance to thiol-specific stress caused by electrophilic quinones. In terms of biological role, also exhibits azoreductase activity. Catalyzes the reductive cleavage of the azo bond in aromatic azo compounds to the corresponding amines. This Streptomyces coelicolor (strain ATCC BAA-471 / A3(2) / M145) protein is FMN-dependent NADH:quinone oxidoreductase.